A 117-amino-acid polypeptide reads, in one-letter code: Large ribosomal subunit protein uL18 (117 aa).

A compositionally biased stretch (basic residues) spans 1–17; it reads MNLSRNKARKVKQKRLR. The interval 1–23 is disordered; that stretch reads MNLSRNKARKVKQKRLRAKSELS.

This sequence belongs to the universal ribosomal protein uL18 family. As to quaternary structure, part of the 50S ribosomal subunit; part of the 5S rRNA/L5/L18/L25 subcomplex. Contacts the 5S and 23S rRNAs.

Its function is as follows. This is one of the proteins that bind and probably mediate the attachment of the 5S RNA into the large ribosomal subunit, where it forms part of the central protuberance. This Mycoplasmopsis synoviae (strain 53) (Mycoplasma synoviae) protein is Large ribosomal subunit protein uL18.